Reading from the N-terminus, the 254-residue chain is tRNA (guanine-N(1)-)-methyltransferase (254 aa).

S-adenosyl-L-methionine-binding positions include glycine 114 and 134–139; that span reads IGDYVL.

The protein belongs to the RNA methyltransferase TrmD family. In terms of assembly, homodimer.

It localises to the cytoplasm. The catalysed reaction is guanosine(37) in tRNA + S-adenosyl-L-methionine = N(1)-methylguanosine(37) in tRNA + S-adenosyl-L-homocysteine + H(+). Functionally, specifically methylates guanosine-37 in various tRNAs. The protein is tRNA (guanine-N(1)-)-methyltransferase of Desulforamulus reducens (strain ATCC BAA-1160 / DSM 100696 / MI-1) (Desulfotomaculum reducens).